The following is a 314-amino-acid chain: Olfactory receptor 1E1 (314 aa).

At 1-25 (MMGQNQTSISDFLLLGLPIQPEQQN) the chain is on the extracellular side. Residue asparagine 5 is glycosylated (N-linked (GlcNAc...) asparagine). The helical transmembrane segment at 26–49 (LCYALFLAMYLTTLLGNLLIIVLI) threads the bilayer. At 50-57 (RLDSHLHT) the chain is on the cytoplasmic side. A helical membrane pass occupies residues 58–79 (PMYLFLSNLSFSDLCFSSVTIP). Topologically, residues 80-100 (KLLQNMQNQDPSIPYADCLTQ) are extracellular. Residues 101–120 (MYFFLLFGDLESFLLVAMAY) traverse the membrane as a helical segment. Residues 121–139 (DRYVAICFPLHYTAIMSPM) are Cytoplasmic-facing. The chain crosses the membrane as a helical span at residues 140 to 158 (LCLALVALSWVLTTFHAML). Over 159–195 (HTLLMARLCFCADNVIPHFFCDMSALLKLAFSDTRVN) the chain is Extracellular. The helical transmembrane segment at 196–219 (EWVIFIMGGLILVIPFLLILGSYA) threads the bilayer. Topologically, residues 220 to 236 (RIVSSILKVPSSKGICK) are cytoplasmic. A helical transmembrane segment spans residues 237–259 (AFSTCGSHLSVVSLFYGTVIGLY). Topologically, residues 260 to 272 (LCSSANSSTLKDT) are extracellular. A helical membrane pass occupies residues 273–292 (VMAMMYTVVTPMLNPFIYSL). The Cytoplasmic portion of the chain corresponds to 293 to 314 (RNRDMKGALSRVIHQKKTFFSL).

This sequence belongs to the G-protein coupled receptor 1 family.

The protein localises to the cell membrane. Odorant receptor. The polypeptide is Olfactory receptor 1E1 (OR1E1) (Homo sapiens (Human)).